We begin with the raw amino-acid sequence, 376 residues long: Lipid-A-disaccharide synthase (376 aa).

Belongs to the LpxB family.

The enzyme catalyses a lipid X + a UDP-2-N,3-O-bis[(3R)-3-hydroxyacyl]-alpha-D-glucosamine = a lipid A disaccharide + UDP + H(+). The protein operates within bacterial outer membrane biogenesis; LPS lipid A biosynthesis. Functionally, condensation of UDP-2,3-diacylglucosamine and 2,3-diacylglucosamine-1-phosphate to form lipid A disaccharide, a precursor of lipid A, a phosphorylated glycolipid that anchors the lipopolysaccharide to the outer membrane of the cell. This Coxiella burnetii (strain RSA 331 / Henzerling II) protein is Lipid-A-disaccharide synthase.